A 441-amino-acid chain; its full sequence is Proline--tRNA ligase (441 aa).

It belongs to the class-II aminoacyl-tRNA synthetase family. ProS type 2 subfamily. As to quaternary structure, homodimer.

The protein resides in the cytoplasm. The enzyme catalyses tRNA(Pro) + L-proline + ATP = L-prolyl-tRNA(Pro) + AMP + diphosphate. In terms of biological role, catalyzes the attachment of proline to tRNA(Pro) in a two-step reaction: proline is first activated by ATP to form Pro-AMP and then transferred to the acceptor end of tRNA(Pro). The sequence is that of Proline--tRNA ligase from Bartonella tribocorum (strain CIP 105476 / IBS 506).